Here is a 467-residue protein sequence, read N- to C-terminus: 3-isopropylmalate dehydratase large subunit (467 aa).

[4Fe-4S] cluster is bound by residues cysteine 347, cysteine 407, and cysteine 410. A compositionally biased stretch (polar residues) spans glutamine 422–arginine 442. The interval glutamine 422–threonine 443 is disordered.

Belongs to the aconitase/IPM isomerase family. LeuC type 1 subfamily. As to quaternary structure, heterodimer of LeuC and LeuD. It depends on [4Fe-4S] cluster as a cofactor.

The enzyme catalyses (2R,3S)-3-isopropylmalate = (2S)-2-isopropylmalate. It participates in amino-acid biosynthesis; L-leucine biosynthesis; L-leucine from 3-methyl-2-oxobutanoate: step 2/4. Catalyzes the isomerization between 2-isopropylmalate and 3-isopropylmalate, via the formation of 2-isopropylmaleate. The protein is 3-isopropylmalate dehydratase large subunit of Nostoc punctiforme (strain ATCC 29133 / PCC 73102).